A 92-amino-acid chain; its full sequence is PqqA binding protein (92 aa).

This sequence belongs to the PqqD family. Monomer. Interacts with PqqE.

The protein operates within cofactor biosynthesis; pyrroloquinoline quinone biosynthesis. Its function is as follows. Functions as a PqqA binding protein and presents PqqA to PqqE, in the pyrroloquinoline quinone (PQQ) biosynthetic pathway. In Xanthomonas oryzae pv. oryzae (strain PXO99A), this protein is PqqA binding protein.